Here is a 384-residue protein sequence, read N- to C-terminus: Surfeit locus protein 1-like (384 aa).

3 helical membrane passes run Ala-55–Leu-75, Ile-302–Ile-322, and Ile-338–Tyr-358.

It belongs to the SURF1 (TC 3.D.4.8) family.

The protein resides in the mitochondrion inner membrane. May be involved in the biogenesis of the COX complex. This chain is Surfeit locus protein 1-like, found in Arabidopsis thaliana (Mouse-ear cress).